The primary structure comprises 284 residues: Ribosomal RNA small subunit methyltransferase A (284 aa).

S-adenosyl-L-methionine-binding residues include Asn-26, Leu-28, Gly-53, Glu-74, Asp-97, and Asn-127.

The protein belongs to the class I-like SAM-binding methyltransferase superfamily. rRNA adenine N(6)-methyltransferase family. RsmA subfamily.

Its subcellular location is the cytoplasm. It carries out the reaction adenosine(1518)/adenosine(1519) in 16S rRNA + 4 S-adenosyl-L-methionine = N(6)-dimethyladenosine(1518)/N(6)-dimethyladenosine(1519) in 16S rRNA + 4 S-adenosyl-L-homocysteine + 4 H(+). Specifically dimethylates two adjacent adenosines (A1518 and A1519) in the loop of a conserved hairpin near the 3'-end of 16S rRNA in the 30S particle. May play a critical role in biogenesis of 30S subunits. The polypeptide is Ribosomal RNA small subunit methyltransferase A (Anaeromyxobacter dehalogenans (strain 2CP-1 / ATCC BAA-258)).